Reading from the N-terminus, the 95-residue chain is Aspartyl/glutamyl-tRNA(Asn/Gln) amidotransferase subunit C (95 aa).

The protein belongs to the GatC family. As to quaternary structure, heterotrimer of A, B and C subunits.

It carries out the reaction L-glutamyl-tRNA(Gln) + L-glutamine + ATP + H2O = L-glutaminyl-tRNA(Gln) + L-glutamate + ADP + phosphate + H(+). It catalyses the reaction L-aspartyl-tRNA(Asn) + L-glutamine + ATP + H2O = L-asparaginyl-tRNA(Asn) + L-glutamate + ADP + phosphate + 2 H(+). Allows the formation of correctly charged Asn-tRNA(Asn) or Gln-tRNA(Gln) through the transamidation of misacylated Asp-tRNA(Asn) or Glu-tRNA(Gln) in organisms which lack either or both of asparaginyl-tRNA or glutaminyl-tRNA synthetases. The reaction takes place in the presence of glutamine and ATP through an activated phospho-Asp-tRNA(Asn) or phospho-Glu-tRNA(Gln). The polypeptide is Aspartyl/glutamyl-tRNA(Asn/Gln) amidotransferase subunit C (Chlorobaculum tepidum (strain ATCC 49652 / DSM 12025 / NBRC 103806 / TLS) (Chlorobium tepidum)).